A 151-amino-acid chain; its full sequence is Testis-expressed protein 29 (151 aa).

Residues 1-56 (MEYVLEVKNSPRHLLKQFTVCDVPLYDICDYNVSRDRCQELGCCFYEGVCYKKAVP) lie on the Extracellular side of the membrane. A helical membrane pass occupies residues 57 to 77 (IYIHVFSALIVIIAGAFVITI). Over 78-151 (IYRVIQESRK…TITEAEETED (74 aa)) the chain is Cytoplasmic. The tract at residues 100-151 (KSSEKAELASSSSKLGLKPASPGPPSAGPSMKSDEDKDDVTGTITEAEETED) is disordered. Residues 107 to 119 (LASSSSKLGLKPA) are compositionally biased toward low complexity.

The protein localises to the membrane. This is Testis-expressed protein 29 (TEX29) from Homo sapiens (Human).